Consider the following 178-residue polypeptide: Dual-action ribosomal maturation protein DarP (178 aa).

Belongs to the DarP family.

It is found in the cytoplasm. Functionally, member of a network of 50S ribosomal subunit biogenesis factors which assembles along the 30S-50S interface, preventing incorrect 23S rRNA structures from forming. Promotes peptidyl transferase center (PTC) maturation. The polypeptide is Dual-action ribosomal maturation protein DarP (Haemophilus influenzae (strain 86-028NP)).